We begin with the raw amino-acid sequence, 276 residues long: Carbonic anhydrase Nec1 (276 aa).

The first 27 residues, 1–27 (MKMINSIFTHGSLIILLLLFHSISIKA), serve as a signal peptide directing secretion. Residues 34–270 (REFDYLEGSE…LNHREVQLHC (237 aa)) form the Alpha-carbonic anhydrase domain. An intrachain disulfide couples Cys-59 to Cys-220. His-98 serves as the catalytic Proton acceptor. Residues His-124 and His-126 each coordinate Zn(2+). Asn-134 is a glycosylation site (N-linked (GlcNAc...) asparagine). Residue His-143 participates in Zn(2+) binding. A substrate binding region spans residues 216 to 217 (TT).

The protein belongs to the alpha-class carbonic anhydrase family. As to quaternary structure, homodimer. Zn(2+) serves as cofactor. In terms of tissue distribution, confined to nectaries.

The catalysed reaction is hydrogencarbonate + H(+) = CO2 + H2O. It functions in the pathway one-carbon metabolism. In terms of biological role, involved in the production of blood-red nectar containing the alkaloid nesocodin and that serves as a visual attractant for pollinator visitation, including vertebrates such as Phelsuma geckos. The nectar is initially acidic and pale yellow, but slowly becomes alkaline before turning into red within 24 hours. Together with NEC2 and NEC3, facilitates the condensation of sinapaldehyde ((E)-3,5-dimethoxy-4-hydroxycinnamaldehyde) and proline to form nesocodin, a pigment with a stable imine bond. Mediates the alkalinization (pH increase) of the flower nectar by catalyzing the reversible hydration of carbon dioxide. In Nesocodon mauritianus (Blue Mauritius bellflower), this protein is Carbonic anhydrase Nec1.